Here is a 122-residue protein sequence, read N- to C-terminus: Large ribosomal subunit protein uL14 (122 aa).

The protein belongs to the universal ribosomal protein uL14 family. As to quaternary structure, part of the 50S ribosomal subunit. Forms a cluster with proteins L3 and L19. In the 70S ribosome, L14 and L19 interact and together make contacts with the 16S rRNA in bridges B5 and B8.

In terms of biological role, binds to 23S rRNA. Forms part of two intersubunit bridges in the 70S ribosome. This Chromobacterium violaceum (strain ATCC 12472 / DSM 30191 / JCM 1249 / CCUG 213 / NBRC 12614 / NCIMB 9131 / NCTC 9757 / MK) protein is Large ribosomal subunit protein uL14.